The primary structure comprises 427 residues: MESLTLQPIARVDGTINLPGSKSVSNRALLLAALAHGKTVLTNLLDSDDVRHMLNALTALGLSYTLSADRTRCEIIGNGGPLHAEGALELFLGNAGTAMRPLAAALCLDSNDIVLTGEPRMKERPIGHLVDALRLGGAKITYLEQENYPPLRLQGGFTGGNVDVDGSVSSQFLTALLMTAPLAPEDTVIRIKGDLVSKPYIDITLNLMKTFGVEIENQHYQQFVVKGGQSYQSPGTYLVEGDASSASYFLAAAAIKGGTVKVTGIGRNSMQGDIRFADVLEKMGATICWGDDYISCTRGELNAIDMDMNHIPDAAMTIATAALFAKGTTTLRNIYNWRVKETDRLFAMATELRKVGAEVEEGHDYIRITPPEKLNFAEIATYNDHRMAMCFSLVALSDTPVTILDPKCTAKTFPDYFEQLARISQAA.

3-phosphoshikimate-binding residues include K22, S23, and R27. K22 lines the phosphoenolpyruvate pocket. Phosphoenolpyruvate is bound by residues G96 and R124. 7 residues coordinate 3-phosphoshikimate: S169, S170, Q171, S197, D313, N336, and K340. A phosphoenolpyruvate-binding site is contributed by Q171. Residue D313 is the Proton acceptor of the active site. The phosphoenolpyruvate site is built by R344, R386, and K411.

The protein belongs to the EPSP synthase family. As to quaternary structure, monomer.

It localises to the cytoplasm. The catalysed reaction is 3-phosphoshikimate + phosphoenolpyruvate = 5-O-(1-carboxyvinyl)-3-phosphoshikimate + phosphate. The protein operates within metabolic intermediate biosynthesis; chorismate biosynthesis; chorismate from D-erythrose 4-phosphate and phosphoenolpyruvate: step 6/7. In terms of biological role, catalyzes the transfer of the enolpyruvyl moiety of phosphoenolpyruvate (PEP) to the 5-hydroxyl of shikimate-3-phosphate (S3P) to produce enolpyruvyl shikimate-3-phosphate and inorganic phosphate. In Shigella flexneri serotype 5b (strain 8401), this protein is 3-phosphoshikimate 1-carboxyvinyltransferase.